The chain runs to 95 residues: Co-chaperonin GroES (95 aa).

The protein belongs to the GroES chaperonin family. Heptamer of 7 subunits arranged in a ring. Interacts with the chaperonin GroEL.

Its subcellular location is the cytoplasm. Its function is as follows. Together with the chaperonin GroEL, plays an essential role in assisting protein folding. The GroEL-GroES system forms a nano-cage that allows encapsulation of the non-native substrate proteins and provides a physical environment optimized to promote and accelerate protein folding. GroES binds to the apical surface of the GroEL ring, thereby capping the opening of the GroEL channel. The polypeptide is Co-chaperonin GroES (Streptococcus thermophilus (strain ATCC BAA-491 / LMD-9)).